Reading from the N-terminus, the 101-residue chain is Small ribosomal subunit protein uS14 (101 aa).

It belongs to the universal ribosomal protein uS14 family. In terms of assembly, part of the 30S ribosomal subunit. Contacts proteins S3 and S10.

Functionally, binds 16S rRNA, required for the assembly of 30S particles and may also be responsible for determining the conformation of the 16S rRNA at the A site. The polypeptide is Small ribosomal subunit protein uS14 (Alteromonas mediterranea (strain DSM 17117 / CIP 110805 / LMG 28347 / Deep ecotype)).